The sequence spans 271 residues: Orotidine 5'-phosphate decarboxylase (271 aa).

The Proton donor role is filled by K95.

The protein belongs to the OMP decarboxylase family. Type 2 subfamily.

It catalyses the reaction orotidine 5'-phosphate + H(+) = UMP + CO2. It functions in the pathway pyrimidine metabolism; UMP biosynthesis via de novo pathway; UMP from orotate: step 2/2. This is Orotidine 5'-phosphate decarboxylase from Janthinobacterium sp. (strain Marseille) (Minibacterium massiliensis).